Here is a 165-residue protein sequence, read N- to C-terminus: uncharacterized protein (165 aa).

The interval Gln-49–Lys-165 is disordered. The span at Met-94–Ser-106 shows a compositional bias: polar residues. Over residues Thr-120–Pro-135 the composition is skewed to low complexity. The span at Ser-139–Ala-157 shows a compositional bias: polar residues.

This is an uncharacterized protein from Caenorhabditis elegans.